Here is a 198-residue protein sequence, read N- to C-terminus: N-acetyltransferase 9-like protein (198 aa).

The N-acetyltransferase domain maps to 14 to 186; that stretch reads IILVPYKEKH…SNNFTNLTAD (173 aa).

It belongs to the acetyltransferase family. GNAT subfamily.

In Nematostella vectensis (Starlet sea anemone), this protein is N-acetyltransferase 9-like protein (nat9).